The sequence spans 332 residues: Abscisic acid-inducible protein kinase (332 aa).

ATP-binding positions include 1–8 (GSGNFGVA) and K23. In terms of domain architecture, Protein kinase spans 1–250 (GSGNFGVAKL…IPEIKNHPWF (250 aa)). Residue D113 is the Proton acceptor of the active site.

Belongs to the protein kinase superfamily. Ser/Thr protein kinase family. Autophosphorylated.

It catalyses the reaction L-seryl-[protein] + ATP = O-phospho-L-seryl-[protein] + ADP + H(+). The catalysed reaction is L-threonyl-[protein] + ATP = O-phospho-L-threonyl-[protein] + ADP + H(+). Involved in water-stress responses. This Triticum aestivum (Wheat) protein is Abscisic acid-inducible protein kinase.